The chain runs to 83 residues: Small ribosomal subunit protein uS17c (83 aa).

The protein belongs to the universal ribosomal protein uS17 family. As to quaternary structure, part of the 30S ribosomal subunit.

It is found in the plastid. It localises to the chloroplast. Functionally, one of the primary rRNA binding proteins, it binds specifically to the 5'-end of 16S ribosomal RNA. This Pyropia yezoensis (Susabi-nori) protein is Small ribosomal subunit protein uS17c (rps17).